We begin with the raw amino-acid sequence, 216 residues long: Minor fimbrial subunit HifD (216 aa).

The signal sequence occupies residues 1 to 19 (MQKTPKKLTALCHQQSTAS). Cys20 carries the N-palmitoyl cysteine lipid modification. A lipid anchor (S-diacylglycerol cysteine) is attached at Cys20. The tract at residues 159–180 (PINVDGSQANSEKAPDTGKEQN) is disordered.

It belongs to the fimbrial protein family.

It is found in the cell membrane. Its subcellular location is the fimbrium. May be a minor structural protein required for pilus biogenesis. In Haemophilus influenzae, this protein is Minor fimbrial subunit HifD (hifD).